The sequence spans 89 residues: Large ribosomal subunit protein uL29c (89 aa).

The protein belongs to the universal ribosomal protein uL29 family.

The protein localises to the plastid. Its subcellular location is the chloroplast. The sequence is that of Large ribosomal subunit protein uL29c (rpl29) from Trieres chinensis (Marine centric diatom).